We begin with the raw amino-acid sequence, 43 residues long: METATLVAIFISGLLVSFTGYALYTAFGQPSQQLRDPFEEHGD.

The chain crosses the membrane as a helical span at residues 7-27; that stretch reads VAIFISGLLVSFTGYALYTAF.

The protein belongs to the PsbN family.

It localises to the plastid. The protein localises to the chloroplast thylakoid membrane. In terms of biological role, may play a role in photosystem I and II biogenesis. The sequence is that of Protein PsbN from Daucus carota (Wild carrot).